The primary structure comprises 914 residues: Alanine--tRNA ligase (914 aa).

Positions 613, 617, 717, and 721 each coordinate Zn(2+).

Belongs to the class-II aminoacyl-tRNA synthetase family. Zn(2+) is required as a cofactor.

It is found in the cytoplasm. The enzyme catalyses tRNA(Ala) + L-alanine + ATP = L-alanyl-tRNA(Ala) + AMP + diphosphate. Its function is as follows. Catalyzes the attachment of alanine to tRNA(Ala) in a two-step reaction: alanine is first activated by ATP to form Ala-AMP and then transferred to the acceptor end of tRNA(Ala). Also edits incorrectly charged Ser-tRNA(Ala) and Gly-tRNA(Ala) via its editing domain. The sequence is that of Alanine--tRNA ligase from Pyrococcus furiosus (strain ATCC 43587 / DSM 3638 / JCM 8422 / Vc1).